A 103-amino-acid polypeptide reads, in one-letter code: Large ribosomal subunit protein uL24 (103 aa).

The protein belongs to the universal ribosomal protein uL24 family. Part of the 50S ribosomal subunit.

Functionally, one of two assembly initiator proteins, it binds directly to the 5'-end of the 23S rRNA, where it nucleates assembly of the 50S subunit. In terms of biological role, one of the proteins that surrounds the polypeptide exit tunnel on the outside of the subunit. In Listeria innocua serovar 6a (strain ATCC BAA-680 / CLIP 11262), this protein is Large ribosomal subunit protein uL24.